A 283-amino-acid polypeptide reads, in one-letter code: Pantothenate synthetase (283 aa).

Residue 34–41 (MGALHDGH) participates in ATP binding. The Proton donor role is filled by His41. (R)-pantoate is bound at residue Gln65. Residue Gln65 participates in beta-alanine binding. Position 152–155 (152–155 (GSKD)) interacts with ATP. Residue Gln158 participates in (R)-pantoate binding. Residues Ile181 and 189-192 (MSSR) contribute to the ATP site.

The protein belongs to the pantothenate synthetase family. Homodimer.

The protein localises to the cytoplasm. The enzyme catalyses (R)-pantoate + beta-alanine + ATP = (R)-pantothenate + AMP + diphosphate + H(+). It participates in cofactor biosynthesis; (R)-pantothenate biosynthesis; (R)-pantothenate from (R)-pantoate and beta-alanine: step 1/1. In terms of biological role, catalyzes the condensation of pantoate with beta-alanine in an ATP-dependent reaction via a pantoyl-adenylate intermediate. The protein is Pantothenate synthetase of Rhodopseudomonas palustris (strain HaA2).